We begin with the raw amino-acid sequence, 492 residues long: Probable glycine dehydrogenase (decarboxylating) subunit 2 (492 aa).

Lysine 274 bears the N6-(pyridoxal phosphate)lysine mark.

The protein belongs to the GcvP family. C-terminal subunit subfamily. The glycine cleavage system is composed of four proteins: P, T, L and H. In this organism, the P 'protein' is a heterodimer of two subunits. Pyridoxal 5'-phosphate is required as a cofactor.

It carries out the reaction N(6)-[(R)-lipoyl]-L-lysyl-[glycine-cleavage complex H protein] + glycine + H(+) = N(6)-[(R)-S(8)-aminomethyldihydrolipoyl]-L-lysyl-[glycine-cleavage complex H protein] + CO2. The glycine cleavage system catalyzes the degradation of glycine. The P protein binds the alpha-amino group of glycine through its pyridoxal phosphate cofactor; CO(2) is released and the remaining methylamine moiety is then transferred to the lipoamide cofactor of the H protein. The sequence is that of Probable glycine dehydrogenase (decarboxylating) subunit 2 from Staphylococcus haemolyticus (strain JCSC1435).